The chain runs to 639 residues: Coiled-coil domain-containing protein 27 (639 aa).

A disordered region spans residues 154 to 176; the sequence is YPRKRSEPSDPSPTGSPTVVKKS. Positions 203 to 242 form a coiled coil; that stretch reads QRFSEMESQMQKKDQEILTLQKEKEALKKQLKNLLRGKGT. The interval 291-385 is disordered; it reads ESSKELHVEP…EECHPKRSYS (95 aa). Residues 292 to 309 are compositionally biased toward basic and acidic residues; it reads SSKELHVEPGSAIEEKSS. A compositionally biased stretch (low complexity) spans 310–320; that stretch reads EGPPEEAAAAK. Acidic residues-rich tracts occupy residues 336 to 350 and 358 to 369; these read GPEE…EVEG and EGEILVNEEEAS. Residues 370 to 380 show a composition bias toward basic and acidic residues; it reads WELREDEECHP.

In Mus musculus (Mouse), this protein is Coiled-coil domain-containing protein 27 (Ccdc27).